A 391-amino-acid polypeptide reads, in one-letter code: Elongation factor Tu (391 aa).

Residues 10 to 201 (KPHVNIGTIG…QVDAYIPTPV (192 aa)) form the tr-type G domain. The interval 19 to 26 (GHVDHGKT) is G1. 19 to 26 (GHVDHGKT) is a binding site for GTP. T26 serves as a coordination point for Mg(2+). The segment at 55–59 (GITIS) is G2. Positions 76–79 (DCPG) are G3. Residues 76-80 (DCPGH) and 131-134 (NKVD) contribute to the GTP site. Positions 131–134 (NKVD) are G4. A G5 region spans residues 169-171 (SAL).

This sequence belongs to the TRAFAC class translation factor GTPase superfamily. Classic translation factor GTPase family. EF-Tu/EF-1A subfamily. Monomer.

It localises to the cytoplasm. It catalyses the reaction GTP + H2O = GDP + phosphate + H(+). Its function is as follows. GTP hydrolase that promotes the GTP-dependent binding of aminoacyl-tRNA to the A-site of ribosomes during protein biosynthesis. The sequence is that of Elongation factor Tu from Mesorhizobium japonicum (strain LMG 29417 / CECT 9101 / MAFF 303099) (Mesorhizobium loti (strain MAFF 303099)).